The chain runs to 434 residues: Gamma-glutamyl phosphate reductase (434 aa).

This sequence belongs to the gamma-glutamyl phosphate reductase family.

Its subcellular location is the cytoplasm. It carries out the reaction L-glutamate 5-semialdehyde + phosphate + NADP(+) = L-glutamyl 5-phosphate + NADPH + H(+). Its pathway is amino-acid biosynthesis; L-proline biosynthesis; L-glutamate 5-semialdehyde from L-glutamate: step 2/2. Catalyzes the NADPH-dependent reduction of L-glutamate 5-phosphate into L-glutamate 5-semialdehyde and phosphate. The product spontaneously undergoes cyclization to form 1-pyrroline-5-carboxylate. This Rhodopirellula baltica (strain DSM 10527 / NCIMB 13988 / SH1) protein is Gamma-glutamyl phosphate reductase.